We begin with the raw amino-acid sequence, 342 residues long: Gibberellin cluster GA4 desaturase (342 aa).

Residues 127–183 (PELAPPYPMPGKSSSGSKEREAIPANELPTTRAKGFQKGEEEGPVRKPHKDWGPSGA) form a disordered region.

This sequence belongs to the asaB hydroxylase/desaturase family.

It functions in the pathway plant hormone biosynthesis; gibberellin biosynthesis. In terms of biological role, GA4 desaturase; part of the gene cluster that mediates the biosynthesis of gibberellins (GAs), diterpenoids that may provide a selective advantage during infection of the preferred host plant, rice. Gibberellins (GAs) are diterpenoids and are synthesized via the mevalonate pathway. Biosynthesis of the major metabolite GA3 (gibberellic acid) from geranylgeranyl diphosphate (GGPP) requires 13 steps. The GGPP produced by the geranylgeranyl diphosphate synthase GGS2 is converted to ent-kaurene via ent-copalyldiphosphate in a two-step cyclization reaction performed by the bifunctional ent-copalyl diphosphate synthase/ent-kaurene synthase enzyme (CPS/KS). Ent-Kaurene is metabolized to GAs by a series of oxidation reactions catalyzed by cytochrome P450 monooxygenases. Cytochrome P450 monooxygenase P450-4 is an ent-kaurene oxidase that catalyzes the three oxidation steps between ent-kaurene and ent-kaurenoic acid. The highly multifunctional cytochrome P450 monooxygenase P450-1 then catalyzes four steps involving oxidation at two carbon atoms, in the main pathway from ent-kaurenoic acid to GA14 via GA12-aldehyde as well as producing kaurenolides and fujenoic acids as by-products. The cytochrome P450 monooxygenase P450-2 then converts GA14 to GA4 by removal of C-20. GA4 is further converted to GA7 by the GA4 desaturase DES via 1,2-desaturation before cytochrome P450 monooxygenase P450-3, a 13-hydroxylase, hydroxylates GA7 to GA3, the final product of the GA-biosynthetic pathway. The chain is Gibberellin cluster GA4 desaturase from Gibberella fujikuroi (strain CBS 195.34 / IMI 58289 / NRRL A-6831) (Bakanae and foot rot disease fungus).